The chain runs to 236 residues: Uridylate kinase (236 aa).

Residue 8–11 (KLSG) coordinates ATP. Gly-51 is a binding site for UMP. Positions 52 and 56 each coordinate ATP. UMP contacts are provided by residues Asp-71 and 133 to 140 (TGRPFFTT). ATP contacts are provided by Asn-161, Phe-167, and Asp-170.

This sequence belongs to the UMP kinase family. Homohexamer.

It is found in the cytoplasm. It catalyses the reaction UMP + ATP = UDP + ADP. It functions in the pathway pyrimidine metabolism; CTP biosynthesis via de novo pathway; UDP from UMP (UMPK route): step 1/1. Inhibited by UTP. Catalyzes the reversible phosphorylation of UMP to UDP. This Mesomycoplasma hyopneumoniae (strain 232) (Mycoplasma hyopneumoniae) protein is Uridylate kinase.